Consider the following 460-residue polypeptide: Carboxypeptidase DacB (460 aa).

Positions 1–28 (MRPTRWRRSTHVAVGVAVLALVVAVVAA) are cleaved as a signal peptide. The tract at residues 39–64 (AAEAVPPAPPPATADPGVVPVDLSAP) is disordered. S113 serves as the catalytic Acyl-ester intermediate. K116 (proton acceptor) is an active-site residue. S294 is an active-site residue.

This sequence belongs to the peptidase S13 family.

Functionally, carboxypeptidase that cleaves terminal D-alanine from peptidoglycan in the mycobacterial cell wall. May cleave L-Lys-D-Ala and/or D-Ala-D-Ala peptide bonds. Exerts important effects on mycobacterial cell morphology and cell division. The chain is Carboxypeptidase DacB from Mycolicibacterium smegmatis (strain ATCC 700084 / mc(2)155) (Mycobacterium smegmatis).